We begin with the raw amino-acid sequence, 605 residues long: Insulin-like growth factor-binding protein complex acid labile subunit (605 aa).

The first 27 residues, 1-27 (MALRKGGLALALLLLSWVALGPRSLEG), serve as a signal peptide directing secretion. An LRRNT domain is found at 32-74 (TPGEAEGPACPAACVCSYDDDADELSVFCSSRNLTRLPDGVPG). Intrachain disulfides connect cysteine 41–cysteine 47 and cysteine 45–cysteine 60. Asparagine 64, asparagine 85, and asparagine 96 each carry an N-linked (GlcNAc...) asparagine glycan. LRR repeat units follow at residues 75–96 (GTQA…AFQN), 99–120 (SLGF…ALLG), 123–144 (NLCH…TFAH), 147–168 (ALAS…LFEG), 171–192 (SLWD…AFRG), 195–216 (SLRE…LFSG), 219–240 (ELRE…VFVQ), 243–264 (RLQK…AFLG), 267–288 (ALRW…TFPG), 291–312 (GLRV…TFKD), 315–336 (FLEE…SFEG), 339–360 (QLEV…AFLG), 363–384 (NVAV…VFRG), 387–408 (KLHS…TFTG), 411–432 (GLRR…SLWG), 435–456 (ELLE…LFQG), 459–480 (KLEY…ALGP), 483–504 (RAFW…LLAP), and 507–528 (RLRY…PPGL). N-linked (GlcNAc...) asparagine glycosylation is present at asparagine 368. Asparagine 515 carries N-linked (GlcNAc...) asparagine glycosylation. One can recognise an LRRCT domain in the interval 536–605 (NPWDCGCPLK…DLSEAHFAPC (70 aa)). 3 cysteine pairs are disulfide-bonded: cysteine 540/cysteine 583, cysteine 542/cysteine 605, and cysteine 566/cysteine 571. Asparagine 580 carries N-linked (GlcNAc...) asparagine glycosylation.

Forms a ternary complex with IGF1 and IGFBP3. In terms of tissue distribution, plasma.

It is found in the secreted. It localises to the extracellular space. Functionally, involved in protein-protein interactions that result in protein complexes, receptor-ligand binding or cell adhesion. This chain is Insulin-like growth factor-binding protein complex acid labile subunit (IGFALS), found in Homo sapiens (Human).